We begin with the raw amino-acid sequence, 132 residues long: Small ribosomal subunit protein uS8 (132 aa).

Belongs to the universal ribosomal protein uS8 family. Part of the 30S ribosomal subunit. Contacts proteins S5 and S12.

One of the primary rRNA binding proteins, it binds directly to 16S rRNA central domain where it helps coordinate assembly of the platform of the 30S subunit. In Rickettsia typhi (strain ATCC VR-144 / Wilmington), this protein is Small ribosomal subunit protein uS8.